We begin with the raw amino-acid sequence, 313 residues long: tRNA pseudouridine synthase B (313 aa).

The active-site Nucleophile is aspartate 48.

This sequence belongs to the pseudouridine synthase TruB family. Type 1 subfamily.

It catalyses the reaction uridine(55) in tRNA = pseudouridine(55) in tRNA. Its function is as follows. Responsible for synthesis of pseudouridine from uracil-55 in the psi GC loop of transfer RNAs. In Saccharophagus degradans (strain 2-40 / ATCC 43961 / DSM 17024), this protein is tRNA pseudouridine synthase B.